Here is a 228-residue protein sequence, read N- to C-terminus: Prolactin (228 aa).

An N-terminal signal peptide occupies residues 1-29 (MCTKRSSLKGSLLLLLLISSLLLSRSVDS). Cysteines 33 and 40 form a disulfide. 3 positions are modified to phosphoserine: Ser-55, Ser-63, and Ser-119. Disulfide bonds link Cys-87/Cys-203 and Cys-220/Cys-228.

Belongs to the somatotropin/prolactin family. In terms of assembly, interacts with PRLR.

It is found in the secreted. Its function is as follows. Prolactin acts primarily on the mammary gland by promoting lactation. This chain is Prolactin (PRL), found in Isoodon macrourus (Short-nosed bandicoot).